Reading from the N-terminus, the 295-residue chain is Aspartate carbamoyltransferase catalytic subunit (295 aa).

2 residues coordinate carbamoyl phosphate: R49 and T50. K77 serves as a coordination point for L-aspartate. Carbamoyl phosphate-binding residues include R99, H127, and Q130. L-aspartate contacts are provided by R161 and R212. The carbamoyl phosphate site is built by G251 and P252.

Belongs to the aspartate/ornithine carbamoyltransferase superfamily. ATCase family. Heterododecamer (2C3:3R2) of six catalytic PyrB chains organized as two trimers (C3), and six regulatory PyrI chains organized as three dimers (R2).

The enzyme catalyses carbamoyl phosphate + L-aspartate = N-carbamoyl-L-aspartate + phosphate + H(+). It functions in the pathway pyrimidine metabolism; UMP biosynthesis via de novo pathway; (S)-dihydroorotate from bicarbonate: step 2/3. Its function is as follows. Catalyzes the condensation of carbamoyl phosphate and aspartate to form carbamoyl aspartate and inorganic phosphate, the committed step in the de novo pyrimidine nucleotide biosynthesis pathway. This Aliarcobacter butzleri (strain RM4018) (Arcobacter butzleri) protein is Aspartate carbamoyltransferase catalytic subunit.